The sequence spans 72 residues: Translation initiation factor IF-1 (72 aa).

Residues 1–72 (MAKEDCIEME…SKGRIIYRAR (72 aa)) enclose the S1-like domain.

This sequence belongs to the IF-1 family. In terms of assembly, component of the 30S ribosomal translation pre-initiation complex which assembles on the 30S ribosome in the order IF-2 and IF-3, IF-1 and N-formylmethionyl-tRNA(fMet); mRNA recruitment can occur at any time during PIC assembly.

Its subcellular location is the cytoplasm. In terms of biological role, one of the essential components for the initiation of protein synthesis. Stabilizes the binding of IF-2 and IF-3 on the 30S subunit to which N-formylmethionyl-tRNA(fMet) subsequently binds. Helps modulate mRNA selection, yielding the 30S pre-initiation complex (PIC). Upon addition of the 50S ribosomal subunit IF-1, IF-2 and IF-3 are released leaving the mature 70S translation initiation complex. In Pseudoalteromonas atlantica (strain T6c / ATCC BAA-1087), this protein is Translation initiation factor IF-1.